Consider the following 209-residue polypeptide: MNIANYTLKVKGKTLLQDTDLHFSSGKINHVVGKNGVGKSQLAKDFLLNNSKRIGRDIRQNVSLISSSSNIPNDVSKDFLLHFLSKKFDAKMIDKIAYLLNLDNIDGKVLIKNLSDGQKQKLKLLSFLLEDKNIIVLDEITNSLDKKTVIEIHGFLNKYIQENPEKIIINITHDLSDLKAIEGDYYIFNHQEIQQYHSVDKLIEVYINE.

Residues 1 to 207 form the ABC transporter domain; the sequence is MNIANYTLKV…SVDKLIEVYI (207 aa). 33–40 is a binding site for ATP; the sequence is GKNGVGKS.

This sequence belongs to the ABC transporter superfamily. The complex is composed of two ATP-binding proteins (YydI), two transmembrane proteins (YydJ).

Suggested to be part of an ABC transporter complex YydIJ involved in export of the modified peptide YydF. Responsible for energy coupling to the transport system. The chain is Probable peptide export ATP-binding protein YydI (yydI) from Bacillus subtilis (strain 168).